Here is a 478-residue protein sequence, read N- to C-terminus: Zinc metalloproteinase/disintegrin (478 aa).

Residues 1–20 (MIEVLLVTICLAVFPYPGSS) form the signal peptide. The propeptide occupies 21–190 (IILESGNVDD…KASQLYLTPE (170 aa)). Gln191 is subject to Pyrrolidone carboxylic acid. The 196-residue stretch at 197–392 (RYIELAIVVD…SKPQCIINAP (196 aa)) folds into the Peptidase M12B domain. Residues Glu200 and Asp284 each contribute to the Ca(2+) site. 3 cysteine pairs are disulfide-bonded: Cys308-Cys387, Cys349-Cys371, and Cys351-Cys354. Residue His333 participates in Zn(2+) binding. Glu334 is a catalytic residue. Zn(2+) is bound by residues His337 and His343. Residues Cys387 and Asn390 each contribute to the Ca(2+) site. A propeptide spanning residues 393-410 (LRTDTVSTPVSGNEFLEA) is cleaved from the precursor. A Disintegrin domain is found at 400 to 478 (TPVSGNEFLE…GQSADCPRNS (79 aa)). 6 cysteine pairs are disulfide-bonded: Cys414–Cys429, Cys416–Cys424, Cys423–Cys446, Cys437–Cys443, Cys442–Cys467, and Cys455–Cys474. A Cell attachment site motif is present at residues 459–461 (RGD). Residues 459-478 (RGDNPDDRCTGQSADCPRNS) are disordered. The segment covering 468–478 (TGQSADCPRNS) has biased composition (polar residues).

This sequence belongs to the venom metalloproteinase (M12B) family. P-II subfamily. P-IIa sub-subfamily. As to quaternary structure, monomer. Zn(2+) is required as a cofactor. Not N-glycosylated. As to expression, expressed by the venom gland.

It is found in the secreted. It carries out the reaction Cleavage of 3-Asn-|-Gln-4, 10-His-|-Leu-11 and 14-Ala-|-Leu-15 in the insulin B chain, and the bond Z-Gly-Pro-|-Leu-Gly-Pro in a small molecule substrate of microbial collagenase.. Its function is as follows. Zinc protease that induces hemorrhage. Functionally, inhibits platelet aggregation induced by ADP, thrombin, and collagen. Acts by inhibiting fibrinogen interaction with platelet receptors GPIIb/GPIIIa (ITGA2B/ITGB3). The sequence is that of Zinc metalloproteinase/disintegrin from Protobothrops flavoviridis (Habu).